The primary structure comprises 726 residues: Endo-1,4-beta-xylanase/feruloyl esterase (726 aa).

Positions 1-19 (MKKLLVALSLIAGSLTASA) are cleaved as a signal peptide. Positions 27 to 369 (YAAGPGLKDA…KRSLQIIRDF (343 aa)) constitute a GH10 domain. The active-site Proton donor; for xylanase activity is the E161. Catalysis depends on E280, which acts as the Nucleophile; for xylanase activity. The segment at 370–726 (DAAMDNRKPK…LEKMAQSLFK (357 aa)) is feruloyl esterase. S629 acts as the Nucleophile; for esterase activity in catalysis.

This sequence in the N-terminal section; belongs to the glycosyl hydrolase 10 (cellulase F) family. In terms of assembly, monomer or homodimer.

The catalysed reaction is Endohydrolysis of (1-&gt;4)-beta-D-xylosidic linkages in xylans.. The enzyme catalyses feruloyl-polysaccharide + H2O = ferulate + polysaccharide.. Its pathway is glycan degradation; xylan degradation. Its function is as follows. Involved in degradation of plant cell wall polysaccharides. Has endo-xylanase activity towards substrates such as oat spelt xylan (OSX), acetylated xylo-oligosaccharides and acetylated xylan, producing primarily xylobiose; cannot hydrolyze xylobiose to xylose. Also has feruloyl esterase activity, releasing ferulic acid from methylferulate, and from the more natural substrates wheat bran, corn fiber, and XOS(FA,Ac), a corn fiber-derived substrate enriched in O-acetyl and ferulic acid esters. Exhibits negligible acetyl esterase activity on sugar acetates. Acts synergistically with Xyl3A to increase the release of xylose from xylan. Does not possess endoglucanase or mannanase activities since it is not able to hydrolyze carboxymethyl cellulose and locust bean gum. The polypeptide is Endo-1,4-beta-xylanase/feruloyl esterase (Xylanibacter ruminicola (strain ATCC 19189 / DSM 19721 / CIP 105475 / JCM 8958 / 23) (Prevotella ruminicola)).